Consider the following 761-residue polypeptide: 52 kDa repressor of the inhibitor of the protein kinase (761 aa).

The segment at Met-1–Phe-86 adopts a THAP-type zinc-finger fold. The span at Gln-116–Thr-132 shows a compositional bias: basic and acidic residues. Residues Gln-116–Asp-149 form a disordered region. The residue at position 566 (Ser-566) is a Phosphoserine.

In terms of assembly, interacts with DNAJC3, probably sequestring it.

Functionally, upstream regulator of interferon-induced serine/threonine protein kinase R (PKR). May block the PKR-inhibitory function of DNAJC3, resulting in restoration of kinase activity and suppression of cell growth. The polypeptide is 52 kDa repressor of the inhibitor of the protein kinase (Homo sapiens (Human)).